The chain runs to 232 residues: Putative membrane protein ORF8 (232 aa).

The segment covering 71-84 (GSSAASIPSAPTPD) has biased composition (low complexity). Residues 71-121 (GSSAASIPSAPTPDATRESPTGEPHRDRALSTETPTPEPSRDGGSTPEVLH) form a disordered region. The next 2 membrane-spanning stretches (helical) occupy residues 166-182 (VFAR…GSVA) and 195-211 (LVVT…WVIV).

It localises to the membrane. This chain is Putative membrane protein ORF8 (ORF8), found in Ictalurid herpesvirus 1 (strain Auburn) (IcHV-1).